The following is a 178-amino-acid chain: 6,7-dimethyl-8-ribityllumazine synthase (178 aa).

Residues Y27, 58-60, and 82-84 contribute to the 5-amino-6-(D-ribitylamino)uracil site; these read SLE and CVI. (2S)-2-hydroxy-3-oxobutyl phosphate is bound at residue 87 to 88; the sequence is AT. Catalysis depends on H90, which acts as the Proton donor. N114 is a binding site for 5-amino-6-(D-ribitylamino)uracil. R128 is a (2S)-2-hydroxy-3-oxobutyl phosphate binding site.

The protein belongs to the DMRL synthase family.

It carries out the reaction (2S)-2-hydroxy-3-oxobutyl phosphate + 5-amino-6-(D-ribitylamino)uracil = 6,7-dimethyl-8-(1-D-ribityl)lumazine + phosphate + 2 H2O + H(+). It participates in cofactor biosynthesis; riboflavin biosynthesis; riboflavin from 2-hydroxy-3-oxobutyl phosphate and 5-amino-6-(D-ribitylamino)uracil: step 1/2. In terms of biological role, catalyzes the formation of 6,7-dimethyl-8-ribityllumazine by condensation of 5-amino-6-(D-ribitylamino)uracil with 3,4-dihydroxy-2-butanone 4-phosphate. This is the penultimate step in the biosynthesis of riboflavin. This is 6,7-dimethyl-8-ribityllumazine synthase from Jannaschia sp. (strain CCS1).